A 127-amino-acid polypeptide reads, in one-letter code: Small ribosomal subunit protein eS8 (127 aa).

This sequence belongs to the eukaryotic ribosomal protein eS8 family. In terms of assembly, part of the 30S ribosomal subunit.

The polypeptide is Small ribosomal subunit protein eS8 (rps8e) (Pyrococcus abyssi (strain GE5 / Orsay)).